We begin with the raw amino-acid sequence, 502 residues long: Xyloglucan-specific endo-beta-1,4-glucanase BoGH5A (502 aa).

The signal sequence occupies residues 1–32 (MEKQSFSDGLFSPLGIKRVIFMLVLLTTSFIS). Residue cysteine 33 is the site of N-palmitoyl cysteine attachment. A lipid anchor (S-diacylglycerol cysteine) is attached at cysteine 33. Residues 67 to 127 (GPAEWHISTS…PDIIINVKQS (61 aa)) enclose the BACON domain. Residues asparagine 165, valine 172, histidine 251, and asparagine 296 each coordinate substrate. Residue glutamate 297 is the Proton donor of the active site. Catalysis depends on glutamate 430, which acts as the Nucleophile. Tryptophan 472 contacts substrate.

It belongs to the glycosyl hydrolase 5 (cellulase A) family.

It localises to the cell outer membrane. The enzyme catalyses xyloglucan + H2O = xyloglucan oligosaccharides.. Its pathway is glucan metabolism; xyloglucan degradation. Its function is as follows. Catalyzes endohydrolysis of 1,4-beta-D-glucosidic linkages in xyloglucan with retention of the beta-configuration of the glycosyl residues in xyloglucan degradation. Cleaves the backbone of the 3 major types of natural xyloglucans (seed galactoxyloglucan from tamarind kernel, dicot fucogalactoxyloglucan from lettuce leaves, and solanaceous arabinogalactoxyloglucan from tomato fruit), to produce xyloglucan oligosaccharides. The polypeptide is Xyloglucan-specific endo-beta-1,4-glucanase BoGH5A (Bacteroides ovatus (strain ATCC 8483 / DSM 1896 / JCM 5824 / BCRC 10623 / CCUG 4943 / NCTC 11153)).